A 324-amino-acid chain; its full sequence is Rho crystallin (324 aa).

Thr-2 carries the post-translational modification N-acetylthreonine. 218 to 281 contributes to the NADP(+) binding site; it reads SVLGSHRDRN…SFTPARIKQN (64 aa).

It belongs to the aldo/keto reductase family. In terms of assembly, monomer.

This is Rho crystallin from Aquarana catesbeiana (American bullfrog).